Here is a 352-residue protein sequence, read N- to C-terminus: 4-hydroxy-2-oxovalerate aldolase 5 (352 aa).

The Pyruvate carboxyltransferase domain maps to 9–261 (IRVTDSSLRD…RTGIDTLKII (253 aa)). Substrate is bound at residue 17 to 18 (RD). Aspartate 18 provides a ligand contact to Mn(2+). Residue histidine 21 is the Proton acceptor of the active site. The substrate site is built by serine 171 and histidine 200. Residues histidine 200 and histidine 202 each contribute to the Mn(2+) site. Residue tyrosine 291 participates in substrate binding.

This sequence belongs to the 4-hydroxy-2-oxovalerate aldolase family.

It carries out the reaction (S)-4-hydroxy-2-oxopentanoate = acetaldehyde + pyruvate. This Rhodococcus opacus (strain B4) protein is 4-hydroxy-2-oxovalerate aldolase 5.